The chain runs to 129 residues: Large ribosomal subunit protein bL12c (129 aa).

The protein belongs to the bacterial ribosomal protein bL12 family. Homodimer. Part of the ribosomal stalk of the 50S ribosomal subunit. Forms a multimeric L10(L12)X complex, where L10 forms an elongated spine to which 2 to 4 L12 dimers bind in a sequential fashion. Binds GTP-bound translation factors.

The protein resides in the plastid. The protein localises to the chloroplast. Its function is as follows. Forms part of the ribosomal stalk which helps the ribosome interact with GTP-bound translation factors. Is thus essential for accurate translation. This is Large ribosomal subunit protein bL12c from Pyropia yezoensis (Susabi-nori).